We begin with the raw amino-acid sequence, 542 residues long: Nuclear hormone receptor family member nhr-35 (542 aa).

Positions 74–149 (NSICHICSDV…SGMRDDQVQS (76 aa)) form a DNA-binding region, nuclear receptor. 2 consecutive NR C4-type zinc fingers follow at residues 77–97 (CHICSDVATGRHYGAIACNGC) and 113–137 (CRFESKCEIDKHNRAVCRYCRFMKC). In terms of domain architecture, NR LBD spans 186 to 438 (EYDQLLESLL…VLMEELILAE (253 aa)). A disordered region spans residues 445-487 (RQDQTPCSIMNDTPSGSQDMCSPCPEDLLRTSTSSNSPTNSSL). Positions 448–464 (QTPCSIMNDTPSGSQDM) are enriched in polar residues. The span at 475-487 (TSTSSNSPTNSSL) shows a compositional bias: low complexity.

Belongs to the nuclear hormone receptor family.

The protein localises to the nucleus. Functionally, orphan nuclear receptor. The polypeptide is Nuclear hormone receptor family member nhr-35 (nhr-35) (Caenorhabditis elegans).